The chain runs to 529 residues: hal-like protein DDB_G0273787/DDB_G0273081 (529 aa).

A cross-link (5-imidazolinone (Ala-Gly)) is located at residues 151 to 153; sequence ASG. Serine 152 is subject to 2,3-didehydroalanine (Ser).

This sequence belongs to the PAL/histidase family. Contains an active site 4-methylidene-imidazol-5-one (MIO), which is formed autocatalytically by cyclization and dehydration of residues Ala-Ser-Gly.

The protein localises to the cytoplasm. It catalyses the reaction L-histidine = trans-urocanate + NH4(+). It participates in amino-acid degradation; L-histidine degradation into L-glutamate; N-formimidoyl-L-glutamate from L-histidine: step 1/3. This chain is hal-like protein DDB_G0273787/DDB_G0273081, found in Dictyostelium discoideum (Social amoeba).